The primary structure comprises 453 residues: uncharacterized protein (453 aa).

The region spanning 276–437 (IAQTKQIKAL…TKQIVRGSST (162 aa)) is the YrdC-like domain.

This is an uncharacterized protein from Mycoplasma pneumoniae (strain ATCC 29342 / M129 / Subtype 1) (Mycoplasmoides pneumoniae).